The primary structure comprises 575 residues: Regulatory protein zeste (575 aa).

Positions 1–26 (MSAQGEGGGAGGSGGGGAGSDGGGNA) are enriched in gly residues. Disordered regions lie at residues 1-53 (MSAQ…LPLT) and 151-174 (SVAS…VKVE). Positions 2 to 47 (SAQGEGGGAGGSGGGGAGSDGGGNAGQSSTGSGTVAVTNGGNSSAK) are hydrophobic. Over residues 31-51 (TGSGTVAVTNGGNSSAKNQLP) the composition is skewed to polar residues. A DNA-binding region spans residues 48–128 (NQLPLTPRFT…WLNSRLRKQY (81 aa)). Residues 151–164 (SVASAVPQQQQQQH) show a composition bias toward low complexity.

Self-associates forming complexes of several hundred monomers.

The protein localises to the nucleus. Involved in transvection phenomena (= synapsis-dependent gene expression), where the synaptic pairing of chromosomes carrying genes with which zeste interacts influences the expression of these genes. Zeste binds to DNA and stimulates transcription from a nearby promoter. In Drosophila melanogaster (Fruit fly), this protein is Regulatory protein zeste (z).